The primary structure comprises 1348 residues: Putative late blight resistance protein homolog R1B-12 (1348 aa).

Coiled coils occupy residues 446–469 (RYSD…ESLQ) and 561–583 (PRMN…KLLN). Positions 552 to 848 (RTSSQLTRTP…ISESFIKSCE (297 aa)) constitute an NB-ARC domain. 595–602 (GMPGLGKT) contributes to the ATP binding site. 8 LRR repeats span residues 977–1001 (FKFL…LLYL), 1051–1074 (LRHL…SAKL), 1123–1147 (PITL…ISAQ), 1151–1170 (YLKL…TADH), 1171–1194 (LKHL…EVSN), 1197–1219 (FPQL…ADDA), 1220–1244 (FPNL…FMDI), and 1309–1332 (LPGI…DMDA). An HMA domain is found at 1284-1348 (VKKMVLKFDT…VGKLINRGML (65 aa)).

This sequence belongs to the disease resistance NB-LRR family.

It is found in the cytoplasm. Its subcellular location is the membrane. Its function is as follows. Confers resistance to late blight (Phytophthora infestans) races carrying the avirulence gene Avr1. Resistance proteins guard the plant against pathogens that contain an appropriate avirulence protein via an indirect interaction with this avirulence protein. That triggers a defense system including the hypersensitive response, which restricts the pathogen growth. The protein is Putative late blight resistance protein homolog R1B-12 (R1B-12) of Solanum demissum (Wild potato).